A 275-amino-acid polypeptide reads, in one-letter code: Diaminopimelate epimerase (275 aa).

Asn-12, Gln-45, and Asn-65 together coordinate substrate. Cys-74 acts as the Proton donor in catalysis. Substrate-binding positions include Gly-75–Asn-76, Asn-158, Asn-191, and Glu-209–Arg-210. The Proton acceptor role is filled by Cys-218. Gly-219–Thr-220 contributes to the substrate binding site.

Belongs to the diaminopimelate epimerase family. Homodimer.

Its subcellular location is the cytoplasm. It carries out the reaction (2S,6S)-2,6-diaminopimelate = meso-2,6-diaminopimelate. Its pathway is amino-acid biosynthesis; L-lysine biosynthesis via DAP pathway; DL-2,6-diaminopimelate from LL-2,6-diaminopimelate: step 1/1. In terms of biological role, catalyzes the stereoinversion of LL-2,6-diaminopimelate (L,L-DAP) to meso-diaminopimelate (meso-DAP), a precursor of L-lysine and an essential component of the bacterial peptidoglycan. The chain is Diaminopimelate epimerase from Shewanella baltica (strain OS223).